The chain runs to 417 residues: Exodeoxyribonuclease 7 large subunit (417 aa).

Belongs to the XseA family. As to quaternary structure, heterooligomer composed of large and small subunits.

It is found in the cytoplasm. It catalyses the reaction Exonucleolytic cleavage in either 5'- to 3'- or 3'- to 5'-direction to yield nucleoside 5'-phosphates.. Its function is as follows. Bidirectionally degrades single-stranded DNA into large acid-insoluble oligonucleotides, which are then degraded further into small acid-soluble oligonucleotides. The polypeptide is Exodeoxyribonuclease 7 large subunit (Lactococcus lactis subsp. cremoris (strain MG1363)).